An 85-amino-acid polypeptide reads, in one-letter code: Large ribosomal subunit protein bL27 (85 aa).

Residues 1 to 20 (MAHKKAGGSTRNGRDSEAKR) form a disordered region.

The protein belongs to the bacterial ribosomal protein bL27 family.

This is Large ribosomal subunit protein bL27 from Salmonella agona (strain SL483).